The sequence spans 148 residues: Ribonuclease H (148 aa).

The RNase H type-1 domain maps to 3-144; that stretch reads AEETVEIFTD…ADALANRGIE (142 aa). Residues D12, E50, D72, and D136 each coordinate Mg(2+). Positions 129–148 are disordered; sequence HPENERADALANRGIEELKG.

This sequence belongs to the RNase H family. As to quaternary structure, monomer. The cofactor is Mg(2+).

It localises to the cytoplasm. It catalyses the reaction Endonucleolytic cleavage to 5'-phosphomonoester.. In terms of biological role, endonuclease that specifically degrades the RNA of RNA-DNA hybrids. This is Ribonuclease H from Dechloromonas aromatica (strain RCB).